The sequence spans 411 residues: Branched-chain-amino-acid aminotransferase, cytosolic (411 aa).

An N6-(pyridoxal phosphate)lysine modification is found at Lys247.

It belongs to the class-IV pyridoxal-phosphate-dependent aminotransferase family. Homodimer. Requires pyridoxal 5'-phosphate as cofactor. Post-translationally, the N-terminus is blocked. As to expression, brain, low expression in ovary and placenta, but not found in liver, kidney, and skeletal muscle.

It is found in the cytoplasm. It carries out the reaction L-leucine + 2-oxoglutarate = 4-methyl-2-oxopentanoate + L-glutamate. The enzyme catalyses L-isoleucine + 2-oxoglutarate = (S)-3-methyl-2-oxopentanoate + L-glutamate. It catalyses the reaction L-valine + 2-oxoglutarate = 3-methyl-2-oxobutanoate + L-glutamate. Its function is as follows. Catalyzes the first reaction in the catabolism of the essential branched chain amino acids leucine, isoleucine, and valine. The chain is Branched-chain-amino-acid aminotransferase, cytosolic (Bcat1) from Rattus norvegicus (Rat).